The chain runs to 93 residues: Small ribosomal subunit protein uS19 (93 aa).

The protein belongs to the universal ribosomal protein uS19 family.

In terms of biological role, protein S19 forms a complex with S13 that binds strongly to the 16S ribosomal RNA. The chain is Small ribosomal subunit protein uS19 from Pediococcus pentosaceus (strain ATCC 25745 / CCUG 21536 / LMG 10740 / 183-1w).